Here is a 274-residue protein sequence, read N- to C-terminus: Serine/threonine-protein kinase 1 (274 aa).

The region spanning alanine 16 to tyrosine 273 is the Protein kinase domain. ATP contacts are provided by residues valine 22–methionine 30 and lysine 46. The active-site Proton acceptor is aspartate 134.

This sequence belongs to the protein kinase superfamily. Ser/Thr protein kinase family.

The catalysed reaction is L-seryl-[protein] + ATP = O-phospho-L-seryl-[protein] + ADP + H(+). It carries out the reaction L-threonyl-[protein] + ATP = O-phospho-L-threonyl-[protein] + ADP + H(+). The chain is Serine/threonine-protein kinase 1 (PK1) from Orgyia pseudotsugata multicapsid polyhedrosis virus (OpMNPV).